A 355-amino-acid chain; its full sequence is Probable protein phosphatase 2C 21 (355 aa).

The PPM-type phosphatase domain maps to 23–329 (RFGLSSMQGW…DNMTIILVQF (307 aa)). The Mn(2+) site is built by aspartate 57, glycine 58, aspartate 272, and aspartate 320. The tract at residues 329-355 (FKKPNPSETEPEDSKPEPSEDEPSSSS) is disordered.

This sequence belongs to the PP2C family. The cofactor is Mg(2+). Mn(2+) serves as cofactor.

It catalyses the reaction O-phospho-L-seryl-[protein] + H2O = L-seryl-[protein] + phosphate. It carries out the reaction O-phospho-L-threonyl-[protein] + H2O = L-threonyl-[protein] + phosphate. The chain is Probable protein phosphatase 2C 21 (PPC4-2) from Arabidopsis thaliana (Mouse-ear cress).